The primary structure comprises 444 residues: UDP-N-acetylmuramate--L-alanine ligase (444 aa).

110–116 (GAHGKTS) is a binding site for ATP.

The protein belongs to the MurCDEF family.

The protein localises to the cytoplasm. It carries out the reaction UDP-N-acetyl-alpha-D-muramate + L-alanine + ATP = UDP-N-acetyl-alpha-D-muramoyl-L-alanine + ADP + phosphate + H(+). It functions in the pathway cell wall biogenesis; peptidoglycan biosynthesis. Its function is as follows. Cell wall formation. The chain is UDP-N-acetylmuramate--L-alanine ligase from Streptococcus sanguinis (strain SK36).